The primary structure comprises 290 residues: Elongation factor Ts (290 aa).

Residues Thr-87–Val-90 form an involved in Mg(2+) ion dislocation from EF-Tu region.

This sequence belongs to the EF-Ts family.

The protein localises to the cytoplasm. Its function is as follows. Associates with the EF-Tu.GDP complex and induces the exchange of GDP to GTP. It remains bound to the aminoacyl-tRNA.EF-Tu.GTP complex up to the GTP hydrolysis stage on the ribosome. The chain is Elongation factor Ts (tsf) from Treponema pallidum (strain Nichols).